Reading from the N-terminus, the 912-residue chain is Ubiquitin carboxyl-terminal hydrolase 3 (912 aa).

Residues 1–11 are compositionally biased toward basic and acidic residues; sequence MNMQDANKEES. Disordered regions lie at residues 1–30, 68–176, 241–384, and 396–417; these read MNMQDANKEESYSMYPKTSSPPPPTPTNMQ, IYHQ…SYSS, NSSV…TTAG, and GKSSSPLLSKQPQKKDKKYVPP. Low complexity-rich tracts occupy residues 82–95, 102–140, and 159–176; these read NNINGGSTTNNNNI, SNGITNNNGSSGNQGANSSGSGMSYNKSHTYHHNYSNNH, and TNSSNGNGSSATSPSYSS. A compositionally biased stretch (basic residues) spans 249–259; that stretch reads AHHHTKSHSIP. The span at 260–310 shows a compositional bias: basic and acidic residues; sequence KHNEEVKTETHGEEEDAHDKKPHASKDAHELKKKTEVKKEDAKQDRNEKVI. Positions 335 to 355 are enriched in low complexity; it reads SKTSSPSPSPPAAKSWSAIAS. Polar residues-rich tracts occupy residues 361–384 and 396–406; these read RQASNKTVSGSMVTKTPISGTTAG and GKSSSPLLSKQ. The 452-residue stretch at 460–911 folds into the USP domain; sequence RGIINRANIC…TAYILMYQKR (452 aa). Residue Cys-469 is the Nucleophile of the active site. The Proton acceptor role is filled by His-861.

This sequence belongs to the peptidase C19 family. Heterotetramer with BRE5; contains two molecules of BRE5 and two molecules of UBP3. Forms a complex composed of CDC48, DOA1, deubiquitinase UBP3 and probably BRE5. Within the complex interacts directly with DOA1 and CDC48 in a BRE5-independent manner.

It catalyses the reaction Thiol-dependent hydrolysis of ester, thioester, amide, peptide and isopeptide bonds formed by the C-terminal Gly of ubiquitin (a 76-residue protein attached to proteins as an intracellular targeting signal).. Has an ATP-independent isopeptidase activity, cleaving at the C-terminus of the ubiquitin moiety in natural or engineered linear fusion proteins, irrespective of their size or the presence of an N-terminal extension to ubiquitin. Plays a role in regulation of silencing by interacting with SIR4. Also, in conjunction with BRE5, cleaves ubiquitin, leading to the subsequent mono-ubiquitination of SEC23. Required for ribophagy, a process which relocalizes ribosomal particles into the vacuole for degradation in response to starvation. The polypeptide is Ubiquitin carboxyl-terminal hydrolase 3 (UBP3) (Saccharomyces cerevisiae (strain ATCC 204508 / S288c) (Baker's yeast)).